The sequence spans 279 residues: NADPH-dependent 7-cyano-7-deazaguanine reductase (279 aa).

86 to 88 contributes to the substrate binding site; sequence IES. An NADPH-binding site is contributed by 88 to 89; that stretch reads SK. The Thioimide intermediate role is filled by Cys187. The active-site Proton donor is Asp194. A substrate-binding site is contributed by 226-227; that stretch reads HE. 255–256 lines the NADPH pocket; it reads RG.

The protein belongs to the GTP cyclohydrolase I family. QueF type 2 subfamily. In terms of assembly, homodimer.

The protein localises to the cytoplasm. It catalyses the reaction 7-aminomethyl-7-carbaguanine + 2 NADP(+) = 7-cyano-7-deazaguanine + 2 NADPH + 3 H(+). The protein operates within tRNA modification; tRNA-queuosine biosynthesis. In terms of biological role, catalyzes the NADPH-dependent reduction of 7-cyano-7-deazaguanine (preQ0) to 7-aminomethyl-7-deazaguanine (preQ1). This chain is NADPH-dependent 7-cyano-7-deazaguanine reductase, found in Actinobacillus pleuropneumoniae serotype 5b (strain L20).